We begin with the raw amino-acid sequence, 207 residues long: Thiamine-phosphate synthase (207 aa).

4-amino-2-methyl-5-(diphosphooxymethyl)pyrimidine contacts are provided by residues 36-40 (QLRMK) and Asn68. 2 residues coordinate Mg(2+): Asp69 and Asp88. Ser106 contributes to the 4-amino-2-methyl-5-(diphosphooxymethyl)pyrimidine binding site. 132–134 (TNT) provides a ligand contact to 2-[(2R,5Z)-2-carboxy-4-methylthiazol-5(2H)-ylidene]ethyl phosphate. Lys135 contacts 4-amino-2-methyl-5-(diphosphooxymethyl)pyrimidine. 2-[(2R,5Z)-2-carboxy-4-methylthiazol-5(2H)-ylidene]ethyl phosphate is bound by residues Gly162 and 182 to 183 (VS).

Belongs to the thiamine-phosphate synthase family. It depends on Mg(2+) as a cofactor.

The catalysed reaction is 2-[(2R,5Z)-2-carboxy-4-methylthiazol-5(2H)-ylidene]ethyl phosphate + 4-amino-2-methyl-5-(diphosphooxymethyl)pyrimidine + 2 H(+) = thiamine phosphate + CO2 + diphosphate. It catalyses the reaction 2-(2-carboxy-4-methylthiazol-5-yl)ethyl phosphate + 4-amino-2-methyl-5-(diphosphooxymethyl)pyrimidine + 2 H(+) = thiamine phosphate + CO2 + diphosphate. It carries out the reaction 4-methyl-5-(2-phosphooxyethyl)-thiazole + 4-amino-2-methyl-5-(diphosphooxymethyl)pyrimidine + H(+) = thiamine phosphate + diphosphate. Its pathway is cofactor biosynthesis; thiamine diphosphate biosynthesis; thiamine phosphate from 4-amino-2-methyl-5-diphosphomethylpyrimidine and 4-methyl-5-(2-phosphoethyl)-thiazole: step 1/1. Its function is as follows. Condenses 4-methyl-5-(beta-hydroxyethyl)thiazole monophosphate (THZ-P) and 2-methyl-4-amino-5-hydroxymethyl pyrimidine pyrophosphate (HMP-PP) to form thiamine monophosphate (TMP). The chain is Thiamine-phosphate synthase from Methanococcus maripaludis (strain C6 / ATCC BAA-1332).